The following is a 188-amino-acid chain: Elongation factor P (188 aa).

The protein belongs to the elongation factor P family.

The protein localises to the cytoplasm. It functions in the pathway protein biosynthesis; polypeptide chain elongation. Involved in peptide bond synthesis. Stimulates efficient translation and peptide-bond synthesis on native or reconstituted 70S ribosomes in vitro. Probably functions indirectly by altering the affinity of the ribosome for aminoacyl-tRNA, thus increasing their reactivity as acceptors for peptidyl transferase. In Anaplasma phagocytophilum (strain HZ), this protein is Elongation factor P.